Reading from the N-terminus, the 102-residue chain is Putative pterin-4-alpha-carbinolamine dehydratase (102 aa).

Belongs to the pterin-4-alpha-carbinolamine dehydratase family.

It carries out the reaction (4aS,6R)-4a-hydroxy-L-erythro-5,6,7,8-tetrahydrobiopterin = (6R)-L-erythro-6,7-dihydrobiopterin + H2O. The sequence is that of Putative pterin-4-alpha-carbinolamine dehydratase from Burkholderia orbicola (strain MC0-3).